The primary structure comprises 514 residues: MARAVHRSGLVALGIATALMASCAFAAKDVVVAVGSNFTTLDPYDANDTLSQAVAKSFYQGLFGLDKEMKLKNVLAESYTVSDDGITYTVKLREGIKFQDGTDFNAVAVKANLDRASDPANHLKRYNLYKNIAKTEAIDPTTVKITLKQPFSAFINILVHPATAMISPTALEKYGKEIGFHPVGTGPYELDTWNQTDFVKVKKFAGYWQPGLPKLDSITWRPVADNNTRAAMLQTGEAQFAFPIPYEQATLLEKNKNIELMASPSIMQRYISMNVTQKPFDNPKVREALNYAINRPALVKVAFAGYATPATGVVPPSIAIAYAQSYKPWPYDPVKARELLKEAGYPNGFSTTLWSSHNHSTAQKVLQFTQQQLAQVGIKAQVTAMDAGQRAAEVEGKGQKESGVRMFYTGWSASTGEADWALSPLFASQNWPPTLFNTAFYSNKQVDDFLAQALKTNDPAEKTRLYKAAQDIIWQESPWIPLVVEKLVSAHSKNLTGFWIMPDTGFSFEDADLQ.

A signal peptide spans 1-26 (MARAVHRSGLVALGIATALMASCAFA).

Belongs to the bacterial solute-binding protein 5 family. In terms of assembly, the complex is composed of two ATP-binding proteins (GsiA), two transmembrane proteins (GsiC and GsiD) and a solute-binding protein (GsiB).

It is found in the periplasm. In terms of biological role, part of the ABC transporter complex GsiABCD involved in glutathione import. Binds glutathione. The protein is Glutathione-binding protein GsiB of Shigella flexneri serotype 5b (strain 8401).